A 503-amino-acid polypeptide reads, in one-letter code: MQMIPGDPFSISSSMGGFVHQETHLHHLQQQIPDLNPNSNPNPNAKPNSSSAKKKRNQPGTPDPDADVIALSPTTLMATNRFVCEICNKGFQRDQNLQLHRRGHNLPWKLKQRSKQEVIKKKVYICPIKTCVHHDASRALGDLTGIKKHYSRKHGEKKWKCEKCSKKYAVQSDWKAHAKTCGTREYKCDCGTLFSRKDSFITHRAFCDALTEEGARMSSLSNNNPVISTTNLNFGNESNVMNNPNLPHGFVHRGVHHPDINAAISQFGLGFGHDLSAMHAQGLSEMVQMASTGNHHLFPSSSSSLPDFSGHHQFQIPMTSTNPSLTLSSSSTSQQTSASLQHQTLKDSSFSPLFSSSSENKQNKPLSPMSATALLQKAAQMGSTRSNSSTAPSFFAGPTMTSSSATASPPPRSSSPMMIQQQLNNFNTNVLRENHNRAPPPLSGVSTSSVDNNPFQSNRSGLNPAQQMGLTRDFLGVSNEHHPHQTGRRPFLPQELARFAPLG.

Low complexity predominate over residues I32–S51. Positions I32–V68 are disordered. Phosphoserine is present on S72. 2 C2H2-type zinc fingers span residues F82–H104 and Y124–H154. 2 consecutive short sequence motifs (nuclear localization signal) follow at residues H100–P107 and I146–K153. The C2H2-type 2; degenerate zinc-finger motif lies at W159–G182. Residues C161, C164, H177, C181, C188, C190, H203, and C207 each coordinate Zn(2+). A CCHC-type 2; atypical zinc finger spans residues Y186–A209. Residues R196–D208 are SHR-binding. Disordered stretches follow at residues S301–M417 and R432–A465. Over residues T319–S358 the composition is skewed to low complexity. Positions M381–P392 are enriched in polar residues. The span at A396–A407 shows a compositional bias: low complexity. Over residues G444–A465 the composition is skewed to polar residues.

In terms of assembly, interacts with SHR, SCR, MGP and itself. The heterodimer with SHR involves its zinc fingers. Interacts with SIEL. Binds to RGA and SCL3 competitively in the nucleus. In terms of tissue distribution, expressed in the quiescent center, the ground tissue stem cells and to a lesser extent in mature cortex and endodermis cells.

It localises to the nucleus. Functionally, transcription factor that, together with BIB, regulates tissue boundaries and asymmetric cell division by a rapid up-regulation of 'SCARECROW' (SCR), thus controlling the nuclear localization of 'SHORT-ROOT' (SHR) and restricting its action. Binds DNA via its zinc fingers. Recognizes and binds to SCL3 promoter sequence 5'-AGACAA-3' to promote its expression when in complex with RGA. Confines CYCD6 expression to the cortex-endodermis initial/daughter (CEI/CEID) tissues. Required for radial patterning and stem cell maintenance. Counteracted by 'MAGPIE' (MGP). Binds to the SCR and MGP promoter sequences. Controls position-dependent signals that regulate epidermal-cell-type patterning. This is Zinc finger protein JACKDAW from Arabidopsis thaliana (Mouse-ear cress).